Here is a 217-residue protein sequence, read N- to C-terminus: MTQISPTRLHSPLDRLLVEAQRALDTVFGNPPAERPNPAADTPDVVLDPEQRLHAAGLMRINHVGEVCAQGLYFGQAAVARDAHTRHHLLEAAQEETDHLAWCADRLHELDSRPSLFNPVWYAGSYALGALAGLRGDDWSLGFVVETERQVEAHLDEHLETLPQSDQRSRAILRVMKIDEARHADQAEQAGARPLPAPIPSAMALASKLMKTVAYRL.

Residues E66, E96, H99, E148, E180, and H183 each coordinate Fe cation.

This sequence belongs to the COQ7 family. Fe cation is required as a cofactor.

The protein resides in the cell membrane. It carries out the reaction a 5-methoxy-2-methyl-3-(all-trans-polyprenyl)benzene-1,4-diol + AH2 + O2 = a 3-demethylubiquinol + A + H2O. Its pathway is cofactor biosynthesis; ubiquinone biosynthesis. Catalyzes the hydroxylation of 2-nonaprenyl-3-methyl-6-methoxy-1,4-benzoquinol during ubiquinone biosynthesis. The protein is 3-demethoxyubiquinol 3-hydroxylase of Xanthomonas axonopodis pv. citri (strain 306).